We begin with the raw amino-acid sequence, 107 residues long: Nucleoid-associated protein Xfasm12_1216 (107 aa).

It belongs to the YbaB/EbfC family. As to quaternary structure, homodimer.

The protein localises to the cytoplasm. The protein resides in the nucleoid. Functionally, binds to DNA and alters its conformation. May be involved in regulation of gene expression, nucleoid organization and DNA protection. The chain is Nucleoid-associated protein Xfasm12_1216 from Xylella fastidiosa (strain M12).